Here is a 157-residue protein sequence, read N- to C-terminus: Protein NrdI (157 aa).

It belongs to the NrdI family.

Its function is as follows. Probably involved in ribonucleotide reductase function. This Mycoplasma capricolum subsp. capricolum (strain California kid / ATCC 27343 / NCTC 10154) protein is Protein NrdI.